The following is a 211-amino-acid chain: Transcriptional regulatory protein RcsA (211 aa).

In terms of domain architecture, HTH luxR-type spans 135 to 200; sequence LDVHPLTLSQ…VIYHVVRLTD (66 aa). The segment at residues 159–178 is a DNA-binding region (H-T-H motif); it reads TIQISDKMQIKAKTVSSHKG.

This sequence belongs to the RcsA family.

Its function is as follows. Component of the Rcs signaling system, which controls transcription of numerous genes. Binds to DNA to regulate expression of genes. The polypeptide is Transcriptional regulatory protein RcsA (Pantoea stewartii subsp. stewartii (Erwinia stewartii)).